A 299-amino-acid chain; its full sequence is Acetylglutamate kinase (299 aa).

Substrate is bound by residues 64 to 65, arginine 86, and asparagine 197; that span reads GG.

This sequence belongs to the acetylglutamate kinase family. ArgB subfamily.

Its subcellular location is the cytoplasm. The enzyme catalyses N-acetyl-L-glutamate + ATP = N-acetyl-L-glutamyl 5-phosphate + ADP. Its pathway is amino-acid biosynthesis; L-arginine biosynthesis; N(2)-acetyl-L-ornithine from L-glutamate: step 2/4. In terms of biological role, catalyzes the ATP-dependent phosphorylation of N-acetyl-L-glutamate. The polypeptide is Acetylglutamate kinase (Sulfurihydrogenibium sp. (strain YO3AOP1)).